We begin with the raw amino-acid sequence, 105 residues long: Large ribosomal subunit protein eL36 (105 aa).

This sequence belongs to the eukaryotic ribosomal protein eL36 family. As to quaternary structure, component of the large ribosomal subunit.

The protein localises to the cytoplasm. It localises to the cytosol. Functionally, component of the large ribosomal subunit. The ribosome is a large ribonucleoprotein complex responsible for the synthesis of proteins in the cell. The polypeptide is Large ribosomal subunit protein eL36 (rpl36) (Danio rerio (Zebrafish)).